A 287-amino-acid chain; its full sequence is MAGAKEIRSKIASVQNTQKITKAMEMVAASKMRKSQDRMAASRPYAETMRKVIGHLAHGNLEYKHPYLEDRDVKRVGYLVVSTDRGLCGGLNINLFKKLLAEMKTWTDKSVQCDLAMIGSKGVSFFNSVGGNVVAQVTGMGDNPSLSELIGPVKVMLQAYDEGRLDKLYIVSNKFINTMSQVPTISQLLPLPASDDDDLKHKSWDYLYEPDPKALLDTLLRRYVESQVYQGVVENLASEQAARMVAMKAATDNGGSLIKELQLVYNKARQASITQELTEIVSGAAAV.

This sequence belongs to the ATPase gamma chain family. In terms of assembly, F-type ATPases have 2 components, CF(1) - the catalytic core - and CF(0) - the membrane proton channel. CF(1) has five subunits: alpha(3), beta(3), gamma(1), delta(1), epsilon(1). CF(0) has three main subunits: a, b and c.

The protein resides in the cell inner membrane. Functionally, produces ATP from ADP in the presence of a proton gradient across the membrane. The gamma chain is believed to be important in regulating ATPase activity and the flow of protons through the CF(0) complex. This chain is ATP synthase gamma chain, found in Shigella sonnei (strain Ss046).